The following is a 317-amino-acid chain: Carbonic anhydrase 6 (317 aa).

Positions 1-17 are cleaved as a signal peptide; it reads MRALVSVVSLFFLGIQA. In terms of domain architecture, Alpha-carbonic anhydrase spans 19–277; sequence SDWSYSGDDG…NNHRVVEANF (259 aa). A disulfide bridge connects residues C41 and C223. Residue H84 is the Proton donor/acceptor of the active site. Zn(2+) contacts are provided by H110, H112, and H137. A substrate-binding site is contributed by 219–220; it reads TT. N255 is a glycosylation site (N-linked (GlcNAc...) asparagine).

The protein belongs to the alpha-carbonic anhydrase family. Zn(2+) serves as cofactor. Major constituent of saliva.

It is found in the secreted. It catalyses the reaction hydrogencarbonate + H(+) = CO2 + H2O. In terms of biological role, reversible hydration of carbon dioxide. Its role in saliva is unknown. This is Carbonic anhydrase 6 (Ca6) from Mus musculus (Mouse).